Consider the following 86-residue polypeptide: Centromere protein W (86 aa).

This sequence belongs to the CENP-W/WIP1 family. In terms of assembly, heterodimer with CENPT; this dimer coassembles with CENPS-CENPX heterodimers at centromeres to form the tetrameric CENP-T-W-S-X complex, which is a subcomplex of the large constitutive centromere-associated network (CCAN, also known as the interphase centromere complex or ICEN). Interacts with NPM1.

It is found in the nucleus. Its subcellular location is the chromosome. It localises to the centromere. The protein resides in the kinetochore. The protein localises to the nucleus matrix. It is found in the nucleolus. Component of the CENPA-NAC (nucleosome-associated) complex, a complex that plays a central role in assembly of kinetochore proteins, mitotic progression and chromosome segregation. The CENPA-NAC complex recruits the CENPA-CAD (nucleosome distal) complex and may be involved in incorporation of newly synthesized CENPA into centromeres. Part of a nucleosome-associated complex that binds specifically to histone H3-containing nucleosomes at the centromere, as opposed to nucleosomes containing CENPA. Component of the heterotetrameric CENP-T-W-S-X complex that binds and supercoils DNA, and plays an important role in kinetochore assembly. CENPW has a fundamental role in kinetochore assembly and function. It is one of the inner kinetochore proteins, with most further proteins binding downstream. Required for normal chromosome organization and normal progress through mitosis. This chain is Centromere protein W (Cenpw), found in Mus musculus (Mouse).